We begin with the raw amino-acid sequence, 236 residues long: THO complex subunit 7B (236 aa).

A coiled-coil region spans residues 99 to 228 (EANLREKESF…IRSASEDQRN (130 aa)).

It belongs to the THOC7 family. Component of the THO complex, which is composed of THO1, THO2, THO3, THO5, THO6 and THO7.

The protein localises to the nucleus. Its function is as follows. Acts as a component of the THO subcomplex of the TREX complex which is thought to couple mRNA transcription, processing and nuclear export. This chain is THO complex subunit 7B (THO7B), found in Arabidopsis thaliana (Mouse-ear cress).